Reading from the N-terminus, the 103-residue chain is Large ribosomal subunit protein eL21 (103 aa).

This sequence belongs to the eukaryotic ribosomal protein eL21 family.

The chain is Large ribosomal subunit protein eL21 from Sulfurisphaera tokodaii (strain DSM 16993 / JCM 10545 / NBRC 100140 / 7) (Sulfolobus tokodaii).